A 301-amino-acid polypeptide reads, in one-letter code: UDP-N-acetylenolpyruvoylglucosamine reductase 1 (301 aa).

An FAD-binding PCMH-type domain is found at 29 to 196 (KIGGPADILI…LEAEFQLQIG (168 aa)). R174 is a catalytic residue. S225 serves as the catalytic Proton donor. The active site involves E295.

Belongs to the MurB family. FAD is required as a cofactor.

It localises to the cytoplasm. The enzyme catalyses UDP-N-acetyl-alpha-D-muramate + NADP(+) = UDP-N-acetyl-3-O-(1-carboxyvinyl)-alpha-D-glucosamine + NADPH + H(+). It functions in the pathway cell wall biogenesis; peptidoglycan biosynthesis. Its function is as follows. Cell wall formation. This chain is UDP-N-acetylenolpyruvoylglucosamine reductase 1, found in Bacillus cereus (strain ZK / E33L).